Reading from the N-terminus, the 160-residue chain is MNAFRLTVEVNGVTHATDVEPRRLLADFLRDDLHLRGTRVGCEHGVCGSCTVLLDGQPVRSCTVLAVQANNSRIETVESLQKDGQLHPLQRSFSKCHALQCGFCTSGFLMTLKPLYDDEDVTLDATSAREAISGNICRCTGYQQIVEATVDAFHCRDHND.

Residues 4–80 (FRLTVEVNGV…NSRIETVESL (77 aa)) enclose the 2Fe-2S ferredoxin-type domain. Positions 42, 47, 50, 62, 101, 104, 137, and 139 each coordinate [2Fe-2S] cluster.

In terms of assembly, heterohexamer of 2 alpha (kdhA), 2 beta (kdhB) and 2 gamma (kdhC) subunit. Dimer of heterotrimers. Requires [2Fe-2S] cluster as cofactor.

It carries out the reaction 6-hydroxypseudooxynicotine + A + H2O = 2,6-dihydroxypseudooxynicotine + AH2. Its pathway is alkaloid degradation; nicotine degradation. In terms of biological role, molybdo-flavoprotein enzyme complex involved in nicotine degradation. The subunit gamma (large subunit) contains the substrate-binding sites, the subunit alpha (medium subunit) binds FAD and the subunit beta (small subunit) has a 2Fe-2S ferredoxin-type domain which binds 2 2Fe-2S clusters. The chain is 6-hydroxypseudooxynicotine dehydrogenase complex subunit beta (kdhB) from Paenarthrobacter nicotinovorans (Arthrobacter nicotinovorans).